We begin with the raw amino-acid sequence, 124 residues long: uncharacterized protein (124 aa).

This is an uncharacterized protein from Saccharomyces cerevisiae (strain ATCC 204508 / S288c) (Baker's yeast).